The primary structure comprises 634 residues: DNA gyrase subunit B (634 aa).

The Toprim domain occupies 416–530 (REIYIVEGDS…NGHVYIAMPP (115 aa)). 3 residues coordinate Mg(2+): Glu422, Asp495, and Asp497.

It belongs to the type II topoisomerase GyrB family. Heterotetramer, composed of two GyrA and two GyrB chains. In the heterotetramer, GyrA contains the active site tyrosine that forms a transient covalent intermediate with DNA, while GyrB binds cofactors and catalyzes ATP hydrolysis. The cofactor is Mg(2+). It depends on Mn(2+) as a cofactor. Requires Ca(2+) as cofactor.

The protein localises to the cytoplasm. The enzyme catalyses ATP-dependent breakage, passage and rejoining of double-stranded DNA.. Functionally, a type II topoisomerase that negatively supercoils closed circular double-stranded (ds) DNA in an ATP-dependent manner to modulate DNA topology and maintain chromosomes in an underwound state. Negative supercoiling favors strand separation, and DNA replication, transcription, recombination and repair, all of which involve strand separation. Also able to catalyze the interconversion of other topological isomers of dsDNA rings, including catenanes and knotted rings. Type II topoisomerases break and join 2 DNA strands simultaneously in an ATP-dependent manner. The protein is DNA gyrase subunit B of Borrelia hermsii.